The primary structure comprises 190 residues: NADH-quinone oxidoreductase subunit C (190 aa).

Belongs to the complex I 30 kDa subunit family. In terms of assembly, NDH-1 is composed of 14 different subunits. Subunits NuoB, C, D, E, F, and G constitute the peripheral sector of the complex.

It is found in the cell membrane. The enzyme catalyses a quinone + NADH + 5 H(+)(in) = a quinol + NAD(+) + 4 H(+)(out). In terms of biological role, NDH-1 shuttles electrons from NADH, via FMN and iron-sulfur (Fe-S) centers, to quinones in the respiratory chain. The immediate electron acceptor for the enzyme in this species is believed to be ubiquinone. Couples the redox reaction to proton translocation (for every two electrons transferred, four hydrogen ions are translocated across the cytoplasmic membrane), and thus conserves the redox energy in a proton gradient. In Wolbachia sp. subsp. Brugia malayi (strain TRS), this protein is NADH-quinone oxidoreductase subunit C.